Here is a 410-residue protein sequence, read N- to C-terminus: Serine hydroxymethyltransferase (410 aa).

Residues L116 and G120–L122 each bind (6S)-5,6,7,8-tetrahydrofolate. K225 is modified (N6-(pyridoxal phosphate)lysine). (6S)-5,6,7,8-tetrahydrofolate is bound at residue S349–F351.

It belongs to the SHMT family. As to quaternary structure, homodimer. Requires pyridoxal 5'-phosphate as cofactor.

The protein resides in the cytoplasm. It catalyses the reaction (6R)-5,10-methylene-5,6,7,8-tetrahydrofolate + glycine + H2O = (6S)-5,6,7,8-tetrahydrofolate + L-serine. The protein operates within one-carbon metabolism; tetrahydrofolate interconversion. It participates in amino-acid biosynthesis; glycine biosynthesis; glycine from L-serine: step 1/1. Its function is as follows. Catalyzes the reversible interconversion of serine and glycine with tetrahydrofolate (THF) serving as the one-carbon carrier. This reaction serves as the major source of one-carbon groups required for the biosynthesis of purines, thymidylate, methionine, and other important biomolecules. Also exhibits THF-independent aldolase activity toward beta-hydroxyamino acids, producing glycine and aldehydes, via a retro-aldol mechanism. The polypeptide is Serine hydroxymethyltransferase (Leuconostoc citreum (strain KM20)).